A 225-amino-acid polypeptide reads, in one-letter code: Large ribosomal subunit protein bL25 (225 aa).

Residues 197–225 (PQREEQMEDTDTAAADEEGDKEEDADKQE) are disordered. Residues 202–225 (QMEDTDTAAADEEGDKEEDADKQE) are compositionally biased toward acidic residues.

This sequence belongs to the bacterial ribosomal protein bL25 family. CTC subfamily. Part of the 50S ribosomal subunit; part of the 5S rRNA/L5/L18/L25 subcomplex. Contacts the 5S rRNA. Binds to the 5S rRNA independently of L5 and L18.

Functionally, this is one of the proteins that binds to the 5S RNA in the ribosome where it forms part of the central protuberance. This chain is Large ribosomal subunit protein bL25, found in Dichelobacter nodosus (strain VCS1703A).